The following is a 172-amino-acid chain: Crossover junction endodeoxyribonuclease RuvC (172 aa).

Active-site residues include Asp7, Glu67, and Asp140. Residues Asp7, Glu67, and Asp140 each coordinate Mg(2+).

The protein belongs to the RuvC family. In terms of assembly, homodimer which binds Holliday junction (HJ) DNA. The HJ becomes 2-fold symmetrical on binding to RuvC with unstacked arms; it has a different conformation from HJ DNA in complex with RuvA. In the full resolvosome a probable DNA-RuvA(4)-RuvB(12)-RuvC(2) complex forms which resolves the HJ. Mg(2+) is required as a cofactor.

The protein resides in the cytoplasm. It carries out the reaction Endonucleolytic cleavage at a junction such as a reciprocal single-stranded crossover between two homologous DNA duplexes (Holliday junction).. Functionally, the RuvA-RuvB-RuvC complex processes Holliday junction (HJ) DNA during genetic recombination and DNA repair. Endonuclease that resolves HJ intermediates. Cleaves cruciform DNA by making single-stranded nicks across the HJ at symmetrical positions within the homologous arms, yielding a 5'-phosphate and a 3'-hydroxyl group; requires a central core of homology in the junction. The consensus cleavage sequence is 5'-(A/T)TT(C/G)-3'. Cleavage occurs on the 3'-side of the TT dinucleotide at the point of strand exchange. HJ branch migration catalyzed by RuvA-RuvB allows RuvC to scan DNA until it finds its consensus sequence, where it cleaves and resolves the cruciform DNA. In Syntrophomonas wolfei subsp. wolfei (strain DSM 2245B / Goettingen), this protein is Crossover junction endodeoxyribonuclease RuvC.